The primary structure comprises 394 residues: NADH dehydrogenase [ubiquinone] iron-sulfur protein 2 (394 aa).

This sequence belongs to the complex I 49 kDa subunit family. As to quaternary structure, complex I is composed of at least 49 different subunits. This is a component of the iron-sulfur (IP) fragment of the enzyme.

The protein localises to the mitochondrion. The catalysed reaction is a ubiquinone + NADH + 5 H(+)(in) = a ubiquinol + NAD(+) + 4 H(+)(out). In terms of biological role, core subunit of the mitochondrial membrane respiratory chain NADH dehydrogenase (Complex I) that is believed to belong to the minimal assembly required for catalysis. Complex I functions in the transfer of electrons from NADH to the respiratory chain. The immediate electron acceptor for the enzyme is believed to be ubiquinone. Component of the iron-sulfur (IP) fragment of the enzyme. This chain is NADH dehydrogenase [ubiquinone] iron-sulfur protein 2 (NAD7), found in Arabidopsis thaliana (Mouse-ear cress).